The primary structure comprises 325 residues: UPF0285 protein Mbar_A0208 (325 aa).

The protein belongs to the UPF0285 family.

This is UPF0285 protein Mbar_A0208 from Methanosarcina barkeri (strain Fusaro / DSM 804).